The sequence spans 414 residues: Esterase FrsA (414 aa).

The protein belongs to the FrsA family.

The enzyme catalyses a carboxylic ester + H2O = an alcohol + a carboxylate + H(+). In terms of biological role, catalyzes the hydrolysis of esters. The polypeptide is Esterase FrsA (Salmonella agona (strain SL483)).